The chain runs to 229 residues: UPF0441 protein YE3666 (229 aa).

2 disordered regions span residues 101–125 (PAQAGMVPTSSSSSETTAAAPQQSG) and 190–229 (KPAVTNTITRGGFGESVAKQSSMQRSAATSSKTSTRSMGG). Composition is skewed to low complexity over residues 109–120 (TSSSSSETTAAA) and 214–229 (RSAATSSKTSTRSMGG).

Belongs to the UPF0441 family.

In Yersinia enterocolitica serotype O:8 / biotype 1B (strain NCTC 13174 / 8081), this protein is UPF0441 protein YE3666.